The primary structure comprises 617 residues: Erythritol-mannosyl-transferase 1 (617 aa).

2 disordered regions span residues 365-396 (RNPG…IDSR) and 567-617 (RQRK…VTNP). Positions 371–381 (GFTSPLNSPTA) are enriched in polar residues. Over residues 386-396 (KWDEKRPIDSR) the composition is skewed to basic and acidic residues. Residues 578–603 (TAKTSLSVDTTEVATPTFTDTETSLS) show a composition bias toward polar residues.

The protein belongs to the UDP-glycosyltransferase family.

It functions in the pathway secondary metabolite biosynthesis. Functionally, glycosyltransferase; part of the gene cluster that mediates the biosynthesis of mannosylerythritol lipids (MELs), surface-active substances that enhance the availability of water-insoluble substrates. Depending on the number of acetyl groups, mannosylerythritol lipids can be differentiated into MEL A (fully acetylated), MEL B and MEL C (monoacetylated at R-6 and R-4, respectively), and the fully deacetylated MEL D. The first step in the pathway is the generation of mannosylerythritol by the glycosyltransferase EMT1 which catalyzes the transfer of GDP-mannose to the C-4 atom of meso-erythritol. This reaction has to be stereospecific, since only mannosyl-D-erythritol is generated. The produced disaccharide is subsequently acylated with fatty acids of various lengths by the acyltransferases MAC1 and MAC2 at positions C-2 and C-3, repectively. The existence of MEL derivatives which carry an acetyl group at C-2 implies that at least MAC1 also accepts acetyl-CoA as a donor. The final step of MEL biosynthesis is the acetylation of the fully acylated mannosylerythritol lipids catalyzed by the acetyl-CoA-dependent acetyltransferase MAT1. MAT1 displays a relaxed regioselectivity and is able to transfer acetylgroups to both positions C-4 and C-6 of the mannosyl moiety. The chain is Erythritol-mannosyl-transferase 1 from Pseudozyma antarctica (strain T-34) (Yeast).